Consider the following 276-residue polypeptide: Undecaprenyl-diphosphatase (276 aa).

Transmembrane regions (helical) follow at residues 85 to 105 (MNVVIATVPAVALALLFEKTI), 108 to 128 (VLFAPVPVAVALVVGGAAILW), 187 to 207 (VATEFSFFLAIPVIFGATLYE), 217 to 237 (VDSVGLFAIGLVAAFVSAFAC), and 253 to 273 (FAWYRIAFGLFVLLVGYSGWI).

The protein belongs to the UppP family.

It localises to the cell inner membrane. The catalysed reaction is di-trans,octa-cis-undecaprenyl diphosphate + H2O = di-trans,octa-cis-undecaprenyl phosphate + phosphate + H(+). In terms of biological role, catalyzes the dephosphorylation of undecaprenyl diphosphate (UPP). Confers resistance to bacitracin. The polypeptide is Undecaprenyl-diphosphatase (Burkholderia mallei (strain NCTC 10247)).